The sequence spans 253 residues: Protein C1orf43 homolog (253 aa).

A helical transmembrane segment spans residues 11–31; sequence VNVVLVMAYGSLVFVLLFIFV.

It localises to the membrane. Its subcellular location is the golgi apparatus. The protein resides in the mitochondrion. In terms of biological role, general regulator of phagocytosis. Required to uptake Gram negative bacterium by macrophages. This chain is Protein C1orf43 homolog, found in Mus musculus (Mouse).